A 216-amino-acid polypeptide reads, in one-letter code: GTP-binding nuclear protein Ran, testis-specific isoform (216 aa).

The residue at position 2 (Ala-2) is an N-acetylalanine. A Small GTPase Ran-type domain is found at 7–171 (PQVQFKVVLV…FWLARKLIGD (165 aa)). Residue 17–24 (GDGGTGKT) participates in GTP binding. Thr-24 is modified (phosphothreonine). The switch-I stretch occupies residues 37-45 (KEYVATLGV). Lys-60 carries the post-translational modification N6-acetyllysine. 65 to 69 (DTAGQ) serves as a coordination point for GTP. The interval 68 to 84 (GQEKFGGLRDGYYIQAQ) is switch-II. Lys-71 is modified (N6-acetyllysine; alternate). Residue Lys-71 forms a Glycyl lysine isopeptide (Lys-Gly) (interchain with G-Cter in SUMO2); alternate linkage. Lys-71 participates in a covalent cross-link: Glycyl lysine isopeptide (Lys-Gly) (interchain with G-Cter in ubiquitin); alternate. N6-acetyllysine is present on Lys-99. 122–125 (NKVD) contributes to the GTP binding site. Position 134 is an N6-acetyllysine (Lys-134). Position 159 is an N6-acetyllysine; alternate (Lys-159). N6-succinyllysine; alternate is present on Lys-159.

The protein belongs to the small GTPase superfamily. Ran family. Testis specific.

Its subcellular location is the nucleus. The enzyme catalyses GTP + H2O = GDP + phosphate + H(+). In terms of biological role, GTP-binding protein involved in nucleocytoplasmic transport. Required for the import of protein into the nucleus and also for RNA export. Involved in chromatin condensation and control of cell cycle. This is GTP-binding nuclear protein Ran, testis-specific isoform (Rasl2-9) from Mus musculus (Mouse).